Consider the following 239-residue polypeptide: Phosphoribosylaminoimidazole-succinocarboxamide synthase (239 aa).

It belongs to the SAICAR synthetase family.

The catalysed reaction is 5-amino-1-(5-phospho-D-ribosyl)imidazole-4-carboxylate + L-aspartate + ATP = (2S)-2-[5-amino-1-(5-phospho-beta-D-ribosyl)imidazole-4-carboxamido]succinate + ADP + phosphate + 2 H(+). Its pathway is purine metabolism; IMP biosynthesis via de novo pathway; 5-amino-1-(5-phospho-D-ribosyl)imidazole-4-carboxamide from 5-amino-1-(5-phospho-D-ribosyl)imidazole-4-carboxylate: step 1/2. The sequence is that of Phosphoribosylaminoimidazole-succinocarboxamide synthase from Bacillus thuringiensis subsp. konkukian (strain 97-27).